A 263-amino-acid chain; its full sequence is Zinc transporter ZupT (263 aa).

5 helical membrane-spanning segments follow: residues 1-21 (MLFAFGLTLFAGLATGIGGLI), 37-57 (LGFSVGVMLYVSFVEILPGAF), 68-88 (GGSWAAVIGFFGGIALIAIID), 116-136 (MMKMGVLTALAIAIHNFPEGF), and 138-158 (TFLAGLSDPMIAIPVAVAIAI). Fe(2+) contacts are provided by Asn-131 and Glu-134. Residue Glu-134 participates in Zn(2+) binding. Zn(2+) is bound at residue His-159. Residues Asn-160, Glu-163, and Glu-192 each contribute to the Fe(2+) site. A Zn(2+)-binding site is contributed by Glu-163. A run of 3 helical transmembrane segments spans residues 184–204 (WATLSGLAEPAGALIGFLLLM), 206–226 (FIGPEALGLCFAAVAGVMVFI), and 243–263 (TAIYGLIAGMAVMAISLLLFI).

The protein belongs to the ZIP transporter (TC 2.A.5) family. ZupT subfamily.

The protein resides in the cell membrane. It carries out the reaction Zn(2+)(in) = Zn(2+)(out). Mediates zinc uptake. May also transport other divalent cations. The chain is Zinc transporter ZupT from Corynebacterium glutamicum (strain ATCC 13032 / DSM 20300 / JCM 1318 / BCRC 11384 / CCUG 27702 / LMG 3730 / NBRC 12168 / NCIMB 10025 / NRRL B-2784 / 534).